Consider the following 564-residue polypeptide: MVTVQDFFRKFIEFQNSPNEKSLQEIVKLVGQLDLRRFNWVRDVFEDIHVKERGSKTALIWRDINTGEEAKLSYHELSLMSNRVLSTLRKHGLKKGDVVYLMTKVHPMHWAVFLAVIKGGFVMVPSATNLTVAEMKYRFSDLKPSAIISDSLRASVMEEALGSLKVEKFLIDGKRETWNSLEDESSNAEPEDTRGEDVIINYFTSGTTGMPKRVIHTAVSYPVGSITTASIVGVRESDLHLNLSATGWAKFAWSSFFSPLLVGATVVGINYEGKLDTRRYLGEVENLGVTSFCAPPTAWRQFITLDLDQFRFERLRSVVSAGEPLNPEVIKIWKDKFNLTIRDFYGQTETTAMVGNFPFLKVKPGSMGKPHPLYDIRLLDDEGKEITKPYEVGHITVKLNPRPIGLFLGYSDEKKNMESFREGYYYTGDKAYFDEEGYFYFVGRGDDVIKTSDYRVGPFEVESALLEHPAVAEAAVVGVPDTVRWQLVKAYIVLKKGYMPSKELAEEIREKMKTLLSPYKVPRIIEFVDELPKTISGKIRRVELRKREEEKRKKGEVGQNEYVF.

Residues 105-125 form a helical membrane-spanning segment; it reads VHPMHWAVFLAVIKGGFVMVP. ATP is bound by residues 204–212, 343–348, aspartate 429, and arginine 444; these read TSGTTGMPK and DFYGQT. Threonine 348 contributes to the substrate binding site. 452–454 is a CoA binding site; the sequence is SDY. Arginine 455 contributes to the substrate binding site. CoA is bound by residues arginine 484, lysine 513, and 521–523; that span reads VPR. Lysine 538 contributes to the ATP binding site.

Belongs to the ATP-dependent AMP-binding enzyme family. It depends on Mg(2+) as a cofactor. Requires Mn(2+) as cofactor.

It is found in the membrane. It carries out the reaction 4-hydroxybutanoate + ATP + CoA = 4-hydroxybutanoyl-CoA + AMP + diphosphate. The enzyme catalyses acetate + ATP + CoA = acetyl-CoA + AMP + diphosphate. The catalysed reaction is propanoate + ATP + CoA = propanoyl-CoA + AMP + diphosphate. It catalyses the reaction a medium-chain fatty acid + ATP + CoA = a medium-chain fatty acyl-CoA + AMP + diphosphate. Functionally, involved in the 3-hydroxypropionate/4-hydroxybutyrate cycle which incorporates carbon dioxide into cellular carbon. Catalyzes the ligation of coenzyme A (CoA) to 4-hydroxybutyrate (4HB). It can also use butyrate, valerate, propionate, acetate and 3-hydroxybutyrate (3HB) as substrates. This chain is 4-hydroxybutyrate--CoA ligase 1, found in Metallosphaera sedula (strain ATCC 51363 / DSM 5348 / JCM 9185 / NBRC 15509 / TH2).